The primary structure comprises 171 residues: MSCISRSRALFQIRSLASSSHLPLPKLRPSPAIYKSANKTAFNASPSTSQSATTTRGFRSTAAKMTVHNLTNAQDFKDALKSHKFVLVDFFATWCGPCRAIAPKIAEWSDAFPNIHYVKVDVDEVPDVAQEYNVRAMPTFLLFKDGEKVDEVVGANPPKLQALISANHPSS.

The Thioredoxin domain occupies 41–169 (AFNASPSTSQ…LQALISANHP (129 aa)). A disulfide bridge connects residues C95 and C98.

Belongs to the thioredoxin family.

The protein resides in the cytoplasm. It localises to the vacuole. In terms of biological role, thioredoxin involved in responses to oxidative and cell wall stresses. Plays an important role in appressorium formation on hyphal tips. TRX2 may affect invasive growth via the MST11-MST7-PMK1 pathway since it is required for the proper folding or dimerization of MAPKK MST7. The chain is Thioredoxin-2 from Pyricularia oryzae (strain 70-15 / ATCC MYA-4617 / FGSC 8958) (Rice blast fungus).